Consider the following 172-residue polypeptide: Protein sym-1 (172 aa).

Transmembrane regions (helical) follow at residues 13–33 (PLLTQAVTTSILFGVGDVAAQ), 52–72 (MVLYGGAVFGPAATTWFRFLQ), 94–114 (GLFAPTFIGIFLGSMAVLEGT), 128–148 (LSTNWMVWPFVQMVNFKVVPL), and 152–172 (VLFVNVISIGWNCYLSWLNGQ).

It belongs to the peroxisomal membrane protein PXMP2/4 family.

It localises to the mitochondrion inner membrane. Functionally, may be involved in cellular response to stress. Required to maintain mitochondrial DNA (mtDNA) integrity and stability. This is Protein sym-1 (sym-1) from Neurospora crassa (strain ATCC 24698 / 74-OR23-1A / CBS 708.71 / DSM 1257 / FGSC 987).